The chain runs to 424 residues: GTPase Obg (424 aa).

The Obg domain occupies 1–158 (MFVDRAEVFV…RYISLELKIL (158 aa)). Residues 21-42 (SFRREKYVPRGGPDGGDGGKGG) are disordered. Gly residues predominate over residues 32-42 (GPDGGDGGKGG). The OBG-type G domain maps to 159–331 (ADVGLLGFPN…LMKEAAAMLT (173 aa)). GTP-binding positions include 165 to 172 (GFPNVGKS), 190 to 194 (FTTLS), 212 to 215 (DIPG), 282 to 285 (NKAD), and 312 to 314 (SAA). The Mg(2+) site is built by Ser172 and Thr192. An OCT domain is found at 345-424 (KFIPEEKRFT…LNDFEFDYIL (80 aa)).

Belongs to the TRAFAC class OBG-HflX-like GTPase superfamily. OBG GTPase family. As to quaternary structure, monomer. The cofactor is Mg(2+).

Its subcellular location is the cytoplasm. An essential GTPase which binds GTP, GDP and possibly (p)ppGpp with moderate affinity, with high nucleotide exchange rates and a fairly low GTP hydrolysis rate. Plays a role in control of the cell cycle, stress response, ribosome biogenesis and in those bacteria that undergo differentiation, in morphogenesis control. The chain is GTPase Obg from Clostridium kluyveri (strain NBRC 12016).